The sequence spans 63 residues: Beta-defensin 6 (63 aa).

An N-terminal signal peptide occupies residues 1 to 22 (MKIHYLLFAFILVMLSPLAAFS). Q23 bears the Pyrrolidone carboxylic acid mark. Disulfide bonds link C31-C59, C38-C52, and C42-C60.

It belongs to the beta-defensin family. In terms of tissue distribution, predominantly expressed in skeletal muscle, also expressed in esophagus, tongue, and trachea. Also expressed in lung when induced by lipopolysaccharide.

The protein resides in the secreted. Has potent antibacterial activity against E.coli (ATCC 25922). This is Beta-defensin 6 (Defb6) from Mus musculus (Mouse).